A 505-amino-acid polypeptide reads, in one-letter code: Glutamate--tRNA ligase (505 aa).

Residues 12–22 carry the 'HIGH' region motif; that stretch reads PSPTGPLHIGG. The short motif at 260–264 is the 'KMSKS' region element; that stretch reads KLSKR. Lysine 263 provides a ligand contact to ATP.

It belongs to the class-I aminoacyl-tRNA synthetase family. Glutamate--tRNA ligase type 1 subfamily. In terms of assembly, monomer.

It localises to the cytoplasm. The catalysed reaction is tRNA(Glu) + L-glutamate + ATP = L-glutamyl-tRNA(Glu) + AMP + diphosphate. Catalyzes the attachment of glutamate to tRNA(Glu) in a two-step reaction: glutamate is first activated by ATP to form Glu-AMP and then transferred to the acceptor end of tRNA(Glu). This Porphyromonas gingivalis (strain ATCC BAA-308 / W83) protein is Glutamate--tRNA ligase.